The chain runs to 85 residues: Three-finger toxin MALT0044C (85 aa).

Positions 1-21 are cleaved as a signal peptide; the sequence is MKTLLLTLVVVTIVCLDLGNT. Intrachain disulfides connect C24–C45, C38–C63, C67–C78, and C79–C84.

Belongs to the three-finger toxin family. Short-chain subfamily. In terms of tissue distribution, expressed by the venom gland.

Its subcellular location is the secreted. The sequence is that of Three-finger toxin MALT0044C from Micrurus altirostris (Uruguayan coral snake).